Consider the following 389-residue polypeptide: S-adenosylmethionine synthase (389 aa).

ATP is bound at residue His-17. Asp-19 serves as a coordination point for Mg(2+). Residue Glu-45 coordinates K(+). L-methionine contacts are provided by Glu-58 and Gln-101. Residues 101–111 (QSPDISQGVDG) form a flexible loop region. ATP-binding positions include 170–172 (DSK), 237–238 (RF), Asp-246, 252–253 (RK), Ala-269, and Lys-273. Asp-246 serves as a coordination point for L-methionine. An L-methionine-binding site is contributed by Lys-277.

Belongs to the AdoMet synthase family. As to quaternary structure, homotetramer; dimer of dimers. Mg(2+) is required as a cofactor. The cofactor is K(+).

Its subcellular location is the cytoplasm. The enzyme catalyses L-methionine + ATP + H2O = S-adenosyl-L-methionine + phosphate + diphosphate. The protein operates within amino-acid biosynthesis; S-adenosyl-L-methionine biosynthesis; S-adenosyl-L-methionine from L-methionine: step 1/1. In terms of biological role, catalyzes the formation of S-adenosylmethionine (AdoMet) from methionine and ATP. The overall synthetic reaction is composed of two sequential steps, AdoMet formation and the subsequent tripolyphosphate hydrolysis which occurs prior to release of AdoMet from the enzyme. The sequence is that of S-adenosylmethionine synthase from Treponema denticola (strain ATCC 35405 / DSM 14222 / CIP 103919 / JCM 8153 / KCTC 15104).